Reading from the N-terminus, the 331-residue chain is DNA-directed RNA polymerase subunit alpha (331 aa).

An alpha N-terminal domain (alpha-NTD) region spans residues 1-246 (MMQTSRTLHN…GLFSPLQEVS (246 aa)). Residues 256 to 331 (AEDNQKNQIP…LTLPRERSKT (76 aa)) form an alpha C-terminal domain (alpha-CTD) region.

It belongs to the RNA polymerase alpha chain family. As to quaternary structure, in cyanobacteria the RNAP catalytic core is composed of 2 alpha, 1 beta, 1 beta', 1 gamma and 1 omega subunit. When a sigma factor is associated with the core the holoenzyme is formed, which can initiate transcription.

It carries out the reaction RNA(n) + a ribonucleoside 5'-triphosphate = RNA(n+1) + diphosphate. Its function is as follows. DNA-dependent RNA polymerase catalyzes the transcription of DNA into RNA using the four ribonucleoside triphosphates as substrates. This chain is DNA-directed RNA polymerase subunit alpha, found in Synechococcus sp. (strain JA-3-3Ab) (Cyanobacteria bacterium Yellowstone A-Prime).